A 1007-amino-acid chain; its full sequence is Serine/threonine-protein kinase PRP4 homolog (1007 aa).

A disordered region spans residues 1 to 104; sequence MAATEPPSLR…PAKRTKLDDL (104 aa). Ala-2 carries the post-translational modification N-acetylalanine. Phosphoserine occurs at positions 8, 21, 24, and 33. Composition is skewed to basic residues over residues 40–60 and 68–82; these read KHSRHKKKKHKHRSKHKKHKH and KKHKHKHKHKKHKRK. Over residues 83–92 the composition is skewed to basic and acidic residues; the sequence is EVLDASDKEG. 2 positions are modified to phosphoserine: Ser-88 and Ser-94. Residue Lys-100 is modified to N6-acetyllysine; alternate. Lys-100 participates in a covalent cross-link: Glycyl lysine isopeptide (Lys-Gly) (interchain with G-Cter in SUMO2); alternate. A Glycyl lysine isopeptide (Lys-Gly) (interchain with G-Cter in SUMO2) cross-link involves residue Lys-112. Lys-118 participates in a covalent cross-link: Glycyl lysine isopeptide (Lys-Gly) (interchain with G-Cter in SUMO2); alternate. A Glycyl lysine isopeptide (Lys-Gly) (interchain with G-Cter in SUMO1); alternate cross-link involves residue Lys-118. Ser-132 is subject to Phosphoserine. Tyr-141 bears the Phosphotyrosine mark. 2 disordered regions span residues 141–535 and 560–583; these read YESG…EDEE and NISVPSEPSSPQSSTRSRSPSPDD. Phosphoserine is present on residues Ser-143, Ser-145, and Ser-167. The span at 158-169 shows a compositional bias: low complexity; it reads GNRSSTRSSSTR. Residues Lys-171 and Lys-178 each participate in a glycyl lysine isopeptide (Lys-Gly) (interchain with G-Cter in SUMO2) cross-link. 2 stretches are compositionally biased toward basic residues: residues 180 to 203 and 215 to 231; these read SAKKRSKSRSKERTRHRSDKRKSK and RSKSKERRKSKSPSKRS. A phosphoserine mark is found at Ser-240, Ser-242, Ser-258, Ser-278, Ser-292, and Ser-294. Over residues 248–271 the composition is skewed to basic and acidic residues; sequence RSQEKVGKARSPADEKIKSEEKGK. Basic and acidic residues predominate over residues 294 to 303; that stretch reads SPVDLRDKSK. Basic residues predominate over residues 304-315; the sequence is DRRSRSKERKSK. Residues 316-325 show a composition bias toward basic and acidic residues; that stretch reads RSEIDKEKKP. Phosphoserine is present on residues Ser-328, Ser-354, Ser-356, Ser-366, and Ser-368. Residues 342–367 show a composition bias toward basic residues; that stretch reads PSRRPGRSPKRRSLSPKQRDKSRRSR. The residue at position 385 (Thr-385) is a Phosphothreonine. Ser-387 bears the Phosphoserine mark. 2 stretches are compositionally biased toward basic and acidic residues: residues 395-408 and 415-429; these read RSLERKRREPERRR and RPRDDILGRCERSKD. 3 positions are modified to phosphoserine: Ser-427, Ser-431, and Ser-437. Positions 438 to 497 are enriched in basic residues; sequence PSRRRSRSPIRRRSRSPLRRSRSPRRRSRSPRRRDRSRRSRSRLRRRSRSRGGHRRRSRS. Phosphoserine occurs at positions 518, 519, 520, 565, 569, 576, 578, and 580. Over residues 518-535 the composition is skewed to acidic residues; it reads SSSDDNLEDFDVEEEDEE. Positions 562–581 are enriched in low complexity; sequence SVPSEPSSPQSSTRSRSPSP. Residues Lys-593 and Lys-659 each participate in a glycyl lysine isopeptide (Lys-Gly) (interchain with G-Cter in SUMO2) cross-link. The Protein kinase domain occupies 687–1003; it reads YNVYGYTGQG…INQALQHAFI (317 aa). ATP-binding positions include 693 to 701 and Lys-717; that span reads TGQGVFSNV. The residue at position 717 (Lys-717) is an N6-acetyllysine. Asp-815 functions as the Proton acceptor in the catalytic mechanism. Position 849 is a phosphotyrosine (Tyr-849). A Phosphoserine modification is found at Ser-852.

It belongs to the protein kinase superfamily. CMGC Ser/Thr protein kinase family. Interacts with CLK1 C-terminus. Associates with the U5 snRNP and NCOR1 deacetylase complexes. Identified in the spliceosome C complex. Phosphorylated by CLK1. Autophosphorylated; phosphorylation inhibits interaction with its targets, such as PRPF6 or SMARCA4.

It is found in the nucleus. Its subcellular location is the chromosome. The protein resides in the centromere. It localises to the kinetochore. It catalyses the reaction L-seryl-[protein] + ATP = O-phospho-L-seryl-[protein] + ADP + H(+). The enzyme catalyses L-threonyl-[protein] + ATP = O-phospho-L-threonyl-[protein] + ADP + H(+). In terms of biological role, serine/threonine kinase involved in spliceosomal assembly as well as mitosis and signaling regulation. Connects chromatin mediated regulation of transcription and pre-mRNA splicing. During spliceosomal assembly, interacts with and phosphorylates PRPF6 and PRPF31, components of the U4/U6-U5 tri-small nuclear ribonucleoprotein (snRNP), to facilitate the formation of the spliceosome B complex. Plays a role in regulating transcription and the spindle assembly checkpoint (SAC). Associates with U5 snRNP and NCOR1 deacetylase complexes which may allow a coordination of pre-mRNA splicing with chromatin remodeling events involved in transcriptional regulation. Associates and probably phosphorylates SMARCA4 and NCOR1. Phosphorylates SRSF1. Associates with kinetochores during mitosis and is necessary for recruitment and maintenance of the checkpoint proteins such as MAD1L1 and MAD12L1 at the kinetochores. Phosphorylates and regulates the activity of the transcription factors such as ELK1 and KLF13. Phosphorylates nuclear YAP1 and WWTR1/TAZ which induces nuclear exclusion and regulates Hippo signaling pathway, involved in tissue growth control. This chain is Serine/threonine-protein kinase PRP4 homolog (Prp4k), found in Rattus norvegicus (Rat).